Here is a 412-residue protein sequence, read N- to C-terminus: Membrane fusion protein MtrC (412 aa).

Positions M1 to S24 are cleaved as a signal peptide. The N-palmitoyl cysteine moiety is linked to residue C25. Residue C25 is the site of S-diacylglycerol cysteine attachment. Positions A377–K412 are disordered. Residues S388 to S403 are compositionally biased toward polar residues.

It belongs to the membrane fusion protein (MFP) (TC 8.A.1) family.

It localises to the cell inner membrane. In terms of biological role, cell membrane lipoprotein, involved in cell membrane permeability to hydrophobic compounds such as antibiotics, dyes and detergents. This Neisseria gonorrhoeae protein is Membrane fusion protein MtrC (mtrC).